The following is a 211-amino-acid chain: Urease accessory protein UreE (211 aa).

Residues 170–211 (EHHGHSHDRGCDHSHSHSHDHDHDHGHVHGPGCGHAPHHRHD) form a disordered region. Residues 176 to 196 (HDRGCDHSHSHSHDHDHDHGH) show a composition bias toward basic and acidic residues.

The protein belongs to the UreE family.

Its subcellular location is the cytoplasm. In terms of biological role, involved in urease metallocenter assembly. Binds nickel. Probably functions as a nickel donor during metallocenter assembly. This is Urease accessory protein UreE from Ralstonia nicotianae (strain ATCC BAA-1114 / GMI1000) (Ralstonia solanacearum).